Here is a 183-residue protein sequence, read N- to C-terminus: Ribosome maturation factor RimM (183 aa).

In terms of domain architecture, PRC barrel spans E104–F183.

The protein belongs to the RimM family. As to quaternary structure, binds ribosomal protein uS19.

The protein localises to the cytoplasm. Its function is as follows. An accessory protein needed during the final step in the assembly of 30S ribosomal subunit, possibly for assembly of the head region. Essential for efficient processing of 16S rRNA. May be needed both before and after RbfA during the maturation of 16S rRNA. It has affinity for free ribosomal 30S subunits but not for 70S ribosomes. In Salmonella choleraesuis (strain SC-B67), this protein is Ribosome maturation factor RimM.